The chain runs to 257 residues: GTP cyclohydrolase FolE2 (257 aa).

This sequence belongs to the GTP cyclohydrolase IV family.

The catalysed reaction is GTP + H2O = 7,8-dihydroneopterin 3'-triphosphate + formate + H(+). The protein operates within cofactor biosynthesis; 7,8-dihydroneopterin triphosphate biosynthesis; 7,8-dihydroneopterin triphosphate from GTP: step 1/1. Functionally, converts GTP to 7,8-dihydroneopterin triphosphate. The protein is GTP cyclohydrolase FolE2 of Pelobacter propionicus (strain DSM 2379 / NBRC 103807 / OttBd1).